The primary structure comprises 189 residues: Elongation factor P (189 aa).

The protein belongs to the elongation factor P family.

The protein localises to the cytoplasm. Its pathway is protein biosynthesis; polypeptide chain elongation. Involved in peptide bond synthesis. Stimulates efficient translation and peptide-bond synthesis on native or reconstituted 70S ribosomes in vitro. Probably functions indirectly by altering the affinity of the ribosome for aminoacyl-tRNA, thus increasing their reactivity as acceptors for peptidyl transferase. This chain is Elongation factor P, found in Orientia tsutsugamushi (strain Ikeda) (Rickettsia tsutsugamushi).